A 113-amino-acid chain; its full sequence is Flagellar hook-basal body complex protein FliE (113 aa).

Belongs to the FliE family.

It localises to the bacterial flagellum basal body. This chain is Flagellar hook-basal body complex protein FliE, found in Rhizobium etli (strain ATCC 51251 / DSM 11541 / JCM 21823 / NBRC 15573 / CFN 42).